The following is a 143-amino-acid chain: Interferon gamma (143 aa).

Gln1 carries the pyrrolidone carboxylic acid modification. N-linked (GlcNAc...) asparagine glycans are attached at residues Asn25 and Asn97.

The protein belongs to the type II (or gamma) interferon family. As to quaternary structure, homodimer. Interacts with IFNGR1 (via extracellular domain); this interaction promotes IFNGR1 dimerization.

Its subcellular location is the secreted. Type II interferon produced by immune cells such as T-cells and NK cells that plays crucial roles in antimicrobial, antiviral, and antitumor responses by activating effector immune cells and enhancing antigen presentation. Primarily signals through the JAK-STAT pathway after interaction with its receptor IFNGR1 to affect gene regulation. Upon IFNG binding, IFNGR1 intracellular domain opens out to allow association of downstream signaling components JAK2, JAK1 and STAT1, leading to STAT1 activation, nuclear translocation and transcription of IFNG-regulated genes. Many of the induced genes are transcription factors such as IRF1 that are able to further drive regulation of a next wave of transcription. Plays a role in class I antigen presentation pathway by inducing a replacement of catalytic proteasome subunits with immunoproteasome subunits. In turn, increases the quantity, quality, and repertoire of peptides for class I MHC loading. Increases the efficiency of peptide generation also by inducing the expression of activator PA28 that associates with the proteasome and alters its proteolytic cleavage preference. Up-regulates as well MHC II complexes on the cell surface by promoting expression of several key molecules such as cathepsins B/CTSB, H/CTSH, and L/CTSL. Participates in the regulation of hematopoietic stem cells during development and under homeostatic conditions by affecting their development, quiescence, and differentiation. This is Interferon gamma (IFNG) from Pan troglodytes (Chimpanzee).